Consider the following 203-residue polypeptide: Outer-membrane lipoprotein LolB (203 aa).

The first 17 residues, 1 to 17 (MNRLFRLLPLASLVLTA), serve as a signal peptide directing secretion. Cys18 is lipidated: N-palmitoyl cysteine. The S-diacylglycerol cysteine moiety is linked to residue Cys18.

The protein belongs to the LolB family. In terms of assembly, monomer.

The protein resides in the cell outer membrane. Plays a critical role in the incorporation of lipoproteins in the outer membrane after they are released by the LolA protein. The chain is Outer-membrane lipoprotein LolB from Klebsiella pneumoniae subsp. pneumoniae (strain ATCC 700721 / MGH 78578).